We begin with the raw amino-acid sequence, 162 residues long: Caveolin-2 (162 aa).

The Cytoplasmic portion of the chain corresponds to 1-86; it reads MGLETEKADV…FEISKYVMYK (86 aa). The residue at position 19 (tyrosine 19) is a Phosphotyrosine; by SRC. Serine 20 is modified (phosphoserine). Tyrosine 27 carries the post-translational modification Phosphotyrosine; by SRC. Serine 36 carries the post-translational modification Phosphoserine. The segment at residues 87–107 is an intramembrane region (helical); sequence FLTVFLAIPLAFAAGILFATL. Residues 108-162 are Cytoplasmic-facing; it reads SCLHIWIIMPFVKTCLMVLPSVQTIWKSVTDVIIAPLCTSVGRSLSSISLQLSHD.

The protein belongs to the caveolin family. In terms of assembly, monomer or homodimer. Interacts with CAV1; the interaction forms a stable heterooligomeric complex that is required for targeting to lipid rafts and for caveolae formation. Tyrosine phosphorylated forms do not form heterooligomers with the Tyr-19-phosphorylated form existing as a monomer or dimer, and the Tyr-27-form as a monomer only. Interacts (tyrosine phosphorylated form) with the SH2 domain-containing proteins, RASA1, NCK1 and SRC. Interacts (tyrosine phosphorylated form) with INSR, the interaction (Tyr-27-phosphorylated form) is increased on insulin stimulation. Interacts (Tyr-19 phosphorylated form) with MAPK1 (phosphorylated form); the interaction, promoted by insulin, leads to nuclear location and MAPK1 activation. Interacts with STAT3; the interaction is increased on insulin-induced tyrosine phosphorylation leading to STAT activation. Post-translationally, phosphorylated on serine and tyrosine residues. Phosphorylation on Ser-36 appears to modulate mitosis in endothelial cells. Phosphorylation on both Tyr-19 and Tyr-27 is required for insulin-induced 'Ser-727' phosphorylation of STAT3 and its activation. Phosphorylation on Tyr-19 is required for insulin-induced phosphorylation of MAPK1 and DNA binding of STAT3. Tyrosine phosphorylation is induced by both EGF and insulin.

The protein localises to the nucleus. The protein resides in the cytoplasm. It localises to the golgi apparatus membrane. It is found in the cell membrane. Its subcellular location is the membrane. The protein localises to the caveola. Functionally, may act as a scaffolding protein within caveolar membranes. Interacts directly with G-protein alpha subunits and can functionally regulate their activity. Acts as an accessory protein in conjunction with CAV1 in targeting to lipid rafts and driving caveolae formation. The Ser-36 phosphorylated form has a role in modulating mitosis in endothelial cells. Positive regulator of cellular mitogenesis of the MAPK signaling pathway. Required for the insulin-stimulated nuclear translocation and activation of MAPK1 and STAT3, and the subsequent regulation of cell cycle progression. This chain is Caveolin-2 (CAV2), found in Eulemur macaco macaco (Black lemur).